We begin with the raw amino-acid sequence, 339 residues long: Phenylalanine--tRNA ligase alpha subunit (339 aa).

Glu254 contacts Mg(2+).

It belongs to the class-II aminoacyl-tRNA synthetase family. Phe-tRNA synthetase alpha subunit type 1 subfamily. Tetramer of two alpha and two beta subunits. Mg(2+) is required as a cofactor.

It is found in the cytoplasm. It catalyses the reaction tRNA(Phe) + L-phenylalanine + ATP = L-phenylalanyl-tRNA(Phe) + AMP + diphosphate + H(+). In Clostridium botulinum (strain ATCC 19397 / Type A), this protein is Phenylalanine--tRNA ligase alpha subunit.